A 368-amino-acid chain; its full sequence is Biotin synthase (368 aa).

Residues 46 to 277 enclose the Radical SAM core domain; the sequence is VHGDEVALCG…AAHIFVMGGR (232 aa). Residues C64, C68, and C71 each contribute to the [4Fe-4S] cluster site. Residues S109, C142, and C202 each contribute to the [2Fe-2S] cluster site. Residues 347–368 form a disordered region; it reads RAAEPGGKRGLPVVGPPRGGCA.

This sequence belongs to the radical SAM superfamily. Biotin synthase family. In terms of assembly, homodimer. The cofactor is [4Fe-4S] cluster. It depends on [2Fe-2S] cluster as a cofactor.

The catalysed reaction is (4R,5S)-dethiobiotin + (sulfur carrier)-SH + 2 reduced [2Fe-2S]-[ferredoxin] + 2 S-adenosyl-L-methionine = (sulfur carrier)-H + biotin + 2 5'-deoxyadenosine + 2 L-methionine + 2 oxidized [2Fe-2S]-[ferredoxin]. It functions in the pathway cofactor biosynthesis; biotin biosynthesis; biotin from 7,8-diaminononanoate: step 2/2. Catalyzes the conversion of dethiobiotin (DTB) to biotin by the insertion of a sulfur atom into dethiobiotin via a radical-based mechanism. The polypeptide is Biotin synthase (Anaeromyxobacter sp. (strain Fw109-5)).